The primary structure comprises 483 residues: tRNA sulfurtransferase (483 aa).

In terms of domain architecture, THUMP spans 63-167; the sequence is GQLIDMLART…DDQVYLVTKK (105 aa). ATP-binding positions include 185–186, Lys267, Gly289, and Gln298; that span reads LI. A disulfide bridge links Cys346 with Cys457. The 79-residue stretch at 405-483 folds into the Rhodanese domain; the sequence is LPVSAKVIDI…GYTNVGVYRP (79 aa). Cys457 (cysteine persulfide intermediate) is an active-site residue.

The protein belongs to the ThiI family.

It is found in the cytoplasm. It carries out the reaction [ThiI sulfur-carrier protein]-S-sulfanyl-L-cysteine + a uridine in tRNA + 2 reduced [2Fe-2S]-[ferredoxin] + ATP + H(+) = [ThiI sulfur-carrier protein]-L-cysteine + a 4-thiouridine in tRNA + 2 oxidized [2Fe-2S]-[ferredoxin] + AMP + diphosphate. It catalyses the reaction [ThiS sulfur-carrier protein]-C-terminal Gly-Gly-AMP + S-sulfanyl-L-cysteinyl-[cysteine desulfurase] + AH2 = [ThiS sulfur-carrier protein]-C-terminal-Gly-aminoethanethioate + L-cysteinyl-[cysteine desulfurase] + A + AMP + 2 H(+). It functions in the pathway cofactor biosynthesis; thiamine diphosphate biosynthesis. In terms of biological role, catalyzes the ATP-dependent transfer of a sulfur to tRNA to produce 4-thiouridine in position 8 of tRNAs, which functions as a near-UV photosensor. Also catalyzes the transfer of sulfur to the sulfur carrier protein ThiS, forming ThiS-thiocarboxylate. This is a step in the synthesis of thiazole, in the thiamine biosynthesis pathway. The sulfur is donated as persulfide by IscS. This chain is tRNA sulfurtransferase, found in Saccharophagus degradans (strain 2-40 / ATCC 43961 / DSM 17024).